Reading from the N-terminus, the 172-residue chain is Small ribosomal subunit protein uS5 (172 aa).

An S5 DRBM domain is found at leucine 17–valine 80.

The protein belongs to the universal ribosomal protein uS5 family. As to quaternary structure, part of the 30S ribosomal subunit. Contacts proteins S4 and S8.

Its function is as follows. With S4 and S12 plays an important role in translational accuracy. Located at the back of the 30S subunit body where it stabilizes the conformation of the head with respect to the body. The polypeptide is Small ribosomal subunit protein uS5 (Ralstonia nicotianae (strain ATCC BAA-1114 / GMI1000) (Ralstonia solanacearum)).